Reading from the N-terminus, the 287-residue chain is Ret finger protein-like 4A (287 aa).

The RING-type; degenerate zinc finger occupies 11 to 53 (CYFCFRCLESPVYLNCGYICCLKCLDSLEKSPEGDGVLCPTCS). Residues 78 to 278 (EPQLNFILTM…LSICPVTNPG (201 aa)) enclose the B30.2/SPRY domain.

As to quaternary structure, interacts with PSMB1, UBE2A and CCNB1. Expressed in the ovaries and oocytes (at protein level). Expression restricted to gonads. In testis, present at later stages of spermatogeneis and abundant in elongating spermatids.

It is found in the cytoplasm. It localises to the nucleus. The protein is Ret finger protein-like 4A (Rfpl4a) of Mus musculus (Mouse).